The primary structure comprises 138 residues: ATP synthase epsilon chain (138 aa).

This sequence belongs to the ATPase epsilon chain family. As to quaternary structure, F-type ATPases have 2 components, CF(1) - the catalytic core - and CF(0) - the membrane proton channel. CF(1) has five subunits: alpha(3), beta(3), gamma(1), delta(1), epsilon(1). CF(0) has three main subunits: a, b and c.

The protein localises to the cell inner membrane. Its function is as follows. Produces ATP from ADP in the presence of a proton gradient across the membrane. This Methylibium petroleiphilum (strain ATCC BAA-1232 / LMG 22953 / PM1) protein is ATP synthase epsilon chain.